We begin with the raw amino-acid sequence, 258 residues long: MSEFNEKPEKLIVDGLRLDGRKFDELRPIKIEASVLKRADGSCYLEMGKNKVIAAVFGPREVHPRHLQDPSKAIIRYRYNMAPFSVEERKRPGPDRRSIEISKVSKEAFEAVIMKELFPRSAIDIFVEVLQADAGSRTACLNAASVALVDAGVPMKGMITSVAVGKADGQLVLDPMKEEDNFGEADMPFAFLIRNGKIESIALLQMDGRMTRDEVKQAIELAKKGALQIYEMQREAILRRYIEVGEEMDEITEGGEDA.

It belongs to the RNase PH family. Rrp41 subfamily. In terms of assembly, component of the archaeal exosome complex. Forms a hexameric ring-like arrangement composed of 3 Rrp41-Rrp42 heterodimers. The hexameric ring associates with a trimer of Rrp4 and/or Csl4 subunits.

It localises to the cytoplasm. Functionally, catalytic component of the exosome, which is a complex involved in RNA degradation. Has 3'-&gt;5' exoribonuclease activity. Can also synthesize heteromeric RNA-tails. The chain is Exosome complex component Rrp41 from Archaeoglobus fulgidus (strain ATCC 49558 / DSM 4304 / JCM 9628 / NBRC 100126 / VC-16).